The primary structure comprises 290 residues: Poly-beta-1,6-N-acetyl-D-glucosamine N-deacetylase (290 aa).

The signal sequence occupies residues 1 to 28; it reads MKYRKLIILVLSILIILPVSTLDGHHIA. Residues 114–290 form the NodB homology domain; sequence RSVWINFDDM…KRWDGFHEKD (177 aa).

The protein belongs to the polysaccharide deacetylase family.

It localises to the secreted. The protein resides in the cell wall. Functionally, catalyzes the N-deacetylation of poly-beta-1,6-N-acetyl-D-glucosamine (PNAG, also referred to as PIA), a biofilm adhesin polysaccharide. N-deacetylation is crucial for attachment of the polysaccharide to the bacterial cell surface; it leads to the introduction of positive charges in the otherwise neutral PIA polymer, allowing electrostatic interactions. The protein is Poly-beta-1,6-N-acetyl-D-glucosamine N-deacetylase (icaB) of Staphylococcus aureus (strain Mu50 / ATCC 700699).